Consider the following 251-residue polypeptide: Triosephosphate isomerase (251 aa).

9-11 (NWK) lines the substrate pocket. His-95 (electrophile) is an active-site residue. Glu-167 acts as the Proton acceptor in catalysis. Substrate-binding positions include Gly-173, Ser-213, and 234 to 235 (GG).

Belongs to the triosephosphate isomerase family. As to quaternary structure, homodimer.

The protein localises to the cytoplasm. It carries out the reaction D-glyceraldehyde 3-phosphate = dihydroxyacetone phosphate. The protein operates within carbohydrate biosynthesis; gluconeogenesis. Its pathway is carbohydrate degradation; glycolysis; D-glyceraldehyde 3-phosphate from glycerone phosphate: step 1/1. Its function is as follows. Involved in the gluconeogenesis. Catalyzes stereospecifically the conversion of dihydroxyacetone phosphate (DHAP) to D-glyceraldehyde-3-phosphate (G3P). The protein is Triosephosphate isomerase of Pelobacter propionicus (strain DSM 2379 / NBRC 103807 / OttBd1).